Here is a 408-residue protein sequence, read N- to C-terminus: S-adenosylmethionine sensor upstream of mTORC1 (408 aa).

Over residues 1–16 (MEAAPRSRPRPGGAAA) the composition is skewed to low complexity. Residues 1–37 (MEAAPRSRPRPGGAAASPPPPPPPPPPEQERKLEQEK) are disordered. Over residues 17-27 (SPPPPPPPPPP) the composition is skewed to pro residues. Positions 28–37 (EQERKLEQEK) are enriched in basic and acidic residues. Residues R97, G175, D193, D205, F206, and S247 each coordinate S-adenosyl-L-methionine.

The protein belongs to the BMT2/SAMTOR family. In terms of assembly, interacts with the GATOR1 complex; interaction is disrupted when SAMTOR binds S-adenosyl-L-methionine. Interacts with the KICSTOR complex; interaction is disrupted when SAMTOR binds S-adenosyl-L-methionine.

In terms of biological role, S-adenosyl-L-methionine-binding protein that acts as an inhibitor of mTORC1 signaling via interaction with the GATOR1 and KICSTOR complexes. Acts as a sensor of S-adenosyl-L-methionine to signal methionine sufficiency to mTORC1: in presence of methionine, binds S-adenosyl-L-methionine, leading to disrupt interaction with the GATOR1 and KICSTOR complexes and promote mTORC1 signaling. Upon methionine starvation, S-adenosyl-L-methionine levels are reduced, thereby promoting the association with GATOR1 and KICSTOR, leading to inhibit mTORC1 signaling. Probably also acts as a S-adenosyl-L-methionine-dependent methyltransferase. The sequence is that of S-adenosylmethionine sensor upstream of mTORC1 from Gallus gallus (Chicken).